Here is a 649-residue protein sequence, read N- to C-terminus: DNA topoisomerase 3 (649 aa).

Residues 1-134 (MRLFIAEKPS…KRQQVRRCLI (134 aa)) enclose the Toprim domain. The Mg(2+) site is built by glutamate 7, aspartate 103, and aspartate 105. In terms of domain architecture, Topo IA-type catalytic spans 155 to 603 (FVPLCVSALA…PLVGTLYQLI (449 aa)). The interaction with DNA stretch occupies residues 194–199 (SVGRVQ). Tyrosine 328 functions as the O-(5'-phospho-DNA)-tyrosine intermediate in the catalytic mechanism. Residues 614–649 (FRGIVAPGGGDKKKSAPRKRAGKKSPPAAETGRQTE) form a disordered region.

Belongs to the type IA topoisomerase family. Requires Mg(2+) as cofactor.

The catalysed reaction is ATP-independent breakage of single-stranded DNA, followed by passage and rejoining.. Releases the supercoiling and torsional tension of DNA, which is introduced during the DNA replication and transcription, by transiently cleaving and rejoining one strand of the DNA duplex. Introduces a single-strand break via transesterification at a target site in duplex DNA. The scissile phosphodiester is attacked by the catalytic tyrosine of the enzyme, resulting in the formation of a DNA-(5'-phosphotyrosyl)-enzyme intermediate and the expulsion of a 3'-OH DNA strand. The free DNA strand then undergoes passage around the unbroken strand, thus removing DNA supercoils. Finally, in the religation step, the DNA 3'-OH attacks the covalent intermediate to expel the active-site tyrosine and restore the DNA phosphodiester backbone. The sequence is that of DNA topoisomerase 3 from Salmonella typhimurium (strain LT2 / SGSC1412 / ATCC 700720).